The primary structure comprises 66 residues: Large ribosomal subunit protein bL35 (66 aa).

Composition is skewed to basic residues over residues 1–26 (MPKM…KRSH) and 38–48 (QKQKRKLRKSA). A disordered region spans residues 1 to 48 (MPKMKTHKGAAKRFKKTGSGKLKRSHAFTSHLFANKSQKQKRKLRKSA).

Belongs to the bacterial ribosomal protein bL35 family.

The protein is Large ribosomal subunit protein bL35 of Halalkalibacterium halodurans (strain ATCC BAA-125 / DSM 18197 / FERM 7344 / JCM 9153 / C-125) (Bacillus halodurans).